Reading from the N-terminus, the 226-residue chain is ATP synthase F(0) complex subunit a (226 aa).

Helical transmembrane passes span 5 to 25 (LFAPFMIPVMLGIPITTLIII), 68 to 88 (WSLMLISLFLFIASTNLLGML), 97 to 117 (QLSMNVGMAIPLWAGTVATGF), 136 to 156 (FLIPMLVIIETISLFIQPVAL), 179 to 199 (LVLMSTSLFTAIITFTILALL), and 201 to 221 (ILEFRVALIQAYVFTLLVSLY).

This sequence belongs to the ATPase A chain family. Component of the ATP synthase complex composed at least of ATP5F1A/subunit alpha, ATP5F1B/subunit beta, ATP5MC1/subunit c (homooctomer), MT-ATP6/subunit a, MT-ATP8/subunit 8, ATP5ME/subunit e, ATP5MF/subunit f, ATP5MG/subunit g, ATP5MK/subunit k, ATP5MJ/subunit j, ATP5F1C/subunit gamma, ATP5F1D/subunit delta, ATP5F1E/subunit epsilon, ATP5PF/subunit F6, ATP5PB/subunit b, ATP5PD/subunit d, ATP5PO/subunit OSCP. ATP synthase complex consists of a soluble F(1) head domain (subunits alpha(3) and beta(3)) - the catalytic core - and a membrane F(0) domain - the membrane proton channel (subunits c, a, 8, e, f, g, k and j). These two domains are linked by a central stalk (subunits gamma, delta, and epsilon) rotating inside the F1 region and a stationary peripheral stalk (subunits F6, b, d, and OSCP). Interacts with DNAJC30; interaction is direct.

The protein resides in the mitochondrion inner membrane. It catalyses the reaction H(+)(in) = H(+)(out). Its function is as follows. Subunit a, of the mitochondrial membrane ATP synthase complex (F(1)F(0) ATP synthase or Complex V) that produces ATP from ADP in the presence of a proton gradient across the membrane which is generated by electron transport complexes of the respiratory chain. ATP synthase complex consist of a soluble F(1) head domain - the catalytic core - and a membrane F(1) domain - the membrane proton channel. These two domains are linked by a central stalk rotating inside the F(1) region and a stationary peripheral stalk. During catalysis, ATP synthesis in the catalytic domain of F(1) is coupled via a rotary mechanism of the central stalk subunits to proton translocation. With the subunit c (ATP5MC1), forms the proton-conducting channel in the F(0) domain, that contains two crucial half-channels (inlet and outlet) that facilitate proton movement from the mitochondrial intermembrane space (IMS) into the matrix. Protons are taken up via the inlet half-channel and released through the outlet half-channel, following a Grotthuss mechanism. The protein is ATP synthase F(0) complex subunit a of Balaenoptera musculus (Blue whale).